The chain runs to 427 residues: Enolase (427 aa).

(2R)-2-phosphoglycerate is bound at residue Gln-162. Glu-204 functions as the Proton donor in the catalytic mechanism. 3 residues coordinate Mg(2+): Asp-241, Glu-283, and Asp-310. (2R)-2-phosphoglycerate contacts are provided by Lys-335, Arg-364, Ser-365, and Lys-386. Lys-335 functions as the Proton acceptor in the catalytic mechanism.

This sequence belongs to the enolase family. Mg(2+) is required as a cofactor.

Its subcellular location is the cytoplasm. The protein resides in the secreted. The protein localises to the cell surface. It catalyses the reaction (2R)-2-phosphoglycerate = phosphoenolpyruvate + H2O. It participates in carbohydrate degradation; glycolysis; pyruvate from D-glyceraldehyde 3-phosphate: step 4/5. Catalyzes the reversible conversion of 2-phosphoglycerate (2-PG) into phosphoenolpyruvate (PEP). It is essential for the degradation of carbohydrates via glycolysis. This Mycolicibacterium smegmatis (strain ATCC 700084 / mc(2)155) (Mycobacterium smegmatis) protein is Enolase.